A 355-amino-acid chain; its full sequence is Nuclear speckle splicing regulatory protein 1 homolog (355 aa).

The disordered stretch occupies residues 1 to 57; sequence MSGTGFRYGLNVMKKKKPNESSNRITFTEDDSSSSEQEHAPIPNSFSSQITAASDAS. Residues 44–54 are compositionally biased toward polar residues; it reads NSFSSQITAAS. The stretch at 99-162 forms a coiled coil; it reads MENLIESAKK…EDRKEEDEKS (64 aa). Disordered regions lie at residues 253-292 and 325-355; these read SANN…HGTY and KIHA…ATNP. A compositionally biased stretch (basic and acidic residues) spans 280–289; it reads YHQDRPDKRH. Positions 293 to 326 form a coiled coil; it reads SLEEIDKQRKEFENRQRLQKEKEFQKSREAALKI. Over residues 329 to 339 the composition is skewed to polar residues; it reads SRNTTETQVQS. Basic residues predominate over residues 346–355; that stretch reads QRKKKAATNP.

The protein belongs to the NSRP1 family.

In Schizosaccharomyces pombe (strain 972 / ATCC 24843) (Fission yeast), this protein is Nuclear speckle splicing regulatory protein 1 homolog.